The following is a 422-amino-acid chain: Inhibitory synaptic factor 2A (422 aa).

The interval 143 to 163 (FLADSKEKSEAGPMEEPRPCS) is disordered. A compositionally biased stretch (basic and acidic residues) spans 146 to 160 (DSKEKSEAGPMEEPR). Serine 177 is modified (phosphoserine). The stretch at 344-370 (TEVVDLKAQLQVMENLISSSQETIKVL) forms a coiled coil.

Belongs to the INSYN2 family. As to quaternary structure, interacts with GPHN.

It is found in the postsynaptic density. Functionally, component of the protein machinery at the inhibitory synapses, probably acting as a scaffold. Inhibitory synapses dampen neuronal activity through postsynaptic hyperpolarization. This synaptic inhibition is fundamental for the functioning of the central nervous system, shaping and orchestrating the flow of information through neuronal networks to generate a precise neural code. This is Inhibitory synaptic factor 2A from Mus musculus (Mouse).